A 210-amino-acid chain; its full sequence is Imidazoleglycerol-phosphate dehydratase (210 aa).

The disordered stretch occupies residues 1-23 (MNDSLLSNGHAPPLRQATVDRQT).

The protein belongs to the imidazoleglycerol-phosphate dehydratase family.

The protein resides in the cytoplasm. The catalysed reaction is D-erythro-1-(imidazol-4-yl)glycerol 3-phosphate = 3-(imidazol-4-yl)-2-oxopropyl phosphate + H2O. The protein operates within amino-acid biosynthesis; L-histidine biosynthesis; L-histidine from 5-phospho-alpha-D-ribose 1-diphosphate: step 6/9. This Thermosynechococcus vestitus (strain NIES-2133 / IAM M-273 / BP-1) protein is Imidazoleglycerol-phosphate dehydratase.